A 914-amino-acid polypeptide reads, in one-letter code: WAG22 antigen (914 aa).

The 93-residue stretch at 1–93 (MSFVIAVPET…GGAYAAAEAA (93 aa)) folds into the PE domain. Disordered stretches follow at residues 412-431 (GGSG…AGGA) and 895-914 (AGAG…HGLT). Residues 895 to 904 (AGAGGAGGLV) show a composition bias toward gly residues.

The protein belongs to the mycobacterial PE family. PGRS subfamily.

The sequence is that of WAG22 antigen (wag22) from Mycobacterium bovis (strain ATCC BAA-935 / AF2122/97).